A 371-amino-acid polypeptide reads, in one-letter code: Conglutinin (371 aa).

The signal sequence occupies residues 1–20 (MLLLPLSVLLLLTQPWRSLG). Positions 46 to 216 (GLPGHDGQDG…TGAKGESGLA (171 aa)) constitute a Collagen-like domain. Residues 47–215 (LPGHDGQDGR…ETGAKGESGL (169 aa)) are disordered. The span at 51-65 (DGQDGRECPHGEKGD) shows a compositional bias: basic and acidic residues. K63 is subject to 5-hydroxylysine. Positions 71 to 83 (PAGRAGRPGWVGP) are enriched in low complexity. 4-hydroxyproline is present on P78. The residue at position 87 (K87) is a 5-hydroxylysine. P96 carries the post-translational modification 4-hydroxyproline. Position 99 is a 5-hydroxylysine (K99). 4 positions are modified to 4-hydroxyproline: P108, P111, P129, and P132. 2 positions are modified to 5-hydroxylysine: K135 and K141. Residues 139–148 (GPKGGVGAPG) are compositionally biased toward gly residues. Residues P147 and P153 each carry the 4-hydroxyproline modification. Residues K159 and K162 each carry the 5-hydroxylysine modification. P171 and P195 each carry 4-hydroxyproline. K198 is modified (5-hydroxylysine). The Cell attachment site signature appears at 201 to 203 (RGD). Residues 273–371 (QLCREAKGQL…SKQLLVICEF (99 aa)) enclose the C-type lectin domain. Disulfide bonds link C275–C369 and C347–C361. N337 is a glycosylation site (N-linked (GlcNAc...) asparagine).

Belongs to the SFTPD family. Oligomeric complex of 4 set of homotrimers. Post-translationally, the hydroxylysines may be O-glycosylated.

In terms of biological role, calcium-dependent lectin-like protein which binds to a yeast cell wall extract and immune complexes through the complement component (C3bi). It is capable of binding non-reducing terminal N-acetylglucosamine, mannose, and fucose residues. This Bos taurus (Bovine) protein is Conglutinin (CGN1).